Here is a 172-residue protein sequence, read N- to C-terminus: Adenine phosphoribosyltransferase (172 aa).

This sequence belongs to the purine/pyrimidine phosphoribosyltransferase family. Homodimer.

It localises to the cytoplasm. It carries out the reaction AMP + diphosphate = 5-phospho-alpha-D-ribose 1-diphosphate + adenine. Its pathway is purine metabolism; AMP biosynthesis via salvage pathway; AMP from adenine: step 1/1. In terms of biological role, catalyzes a salvage reaction resulting in the formation of AMP, that is energically less costly than de novo synthesis. The chain is Adenine phosphoribosyltransferase from Roseiflexus castenholzii (strain DSM 13941 / HLO8).